The chain runs to 286 residues: 4-hydroxybenzoate octaprenyltransferase (286 aa).

A run of 7 helical transmembrane segments spans residues 21-40 (GTLL…AGGM), 95-115 (ILFV…NGLV), 142-162 (FLGI…TGEV), 167-187 (WWLF…YAMV), 210-230 (QIIG…GWSA), 235-255 (LYGL…MLIF), and 266-286 (FLNN…DYLI).

It belongs to the UbiA prenyltransferase family. Mg(2+) is required as a cofactor.

It is found in the cell inner membrane. It carries out the reaction all-trans-octaprenyl diphosphate + 4-hydroxybenzoate = 4-hydroxy-3-(all-trans-octaprenyl)benzoate + diphosphate. It participates in cofactor biosynthesis; ubiquinone biosynthesis. Catalyzes the prenylation of para-hydroxybenzoate (PHB) with an all-trans polyprenyl group. Mediates the second step in the final reaction sequence of ubiquinone-8 (UQ-8) biosynthesis, which is the condensation of the polyisoprenoid side chain with PHB, generating the first membrane-bound Q intermediate 3-octaprenyl-4-hydroxybenzoate. This Shewanella baltica (strain OS155 / ATCC BAA-1091) protein is 4-hydroxybenzoate octaprenyltransferase.